The following is a 249-amino-acid chain: Phosphonates import ATP-binding protein PhnC (249 aa).

An ABC transporter domain is found at Ile2–Ile246. ATP is bound at residue Gly35–Thr42.

This sequence belongs to the ABC transporter superfamily. Phosphonates importer (TC 3.A.1.9.1) family. The complex is composed of two ATP-binding proteins (PhnC), two transmembrane proteins (PhnE) and a solute-binding protein (PhnD).

The protein localises to the cell membrane. It carries out the reaction phosphonate(out) + ATP + H2O = phosphonate(in) + ADP + phosphate + H(+). Functionally, part of the ABC transporter complex PhnCDE involved in phosphonates import. Responsible for energy coupling to the transport system. This chain is Phosphonates import ATP-binding protein PhnC, found in Mesoplasma florum (strain ATCC 33453 / NBRC 100688 / NCTC 11704 / L1) (Acholeplasma florum).